The primary structure comprises 371 residues: MSNQHALLISNLLPVGSNISTWWNFGSMLLTCLMLQVLTGFFLAIHYTANINLAFSSVVHITRDVPCGWIMQNTHAIGASLFFICIYIHIARGLYYGLYLNKNVWLSGVTLLMTLMATAFFGYVLPWGQMSFWAATVITNLLTAIPYLGVAVTTWLWGGFSINDPTLTRFFALHFILPFIIISLSSIHIILLHNEGSNNPLGTNSDIDKIPFHPYHSYKDLMTTTSMIILLFIILSFSPDLLNDPENFSKANPLVTPQHIKPEWYFLFAYGILRSIPNKLGGTLALLMSILILTLPPFTHTFYIRPMTFRPLSQTLFWTLIATFVMITWTATKPVEPPFITISQLTSIFYFSFFIMNPLLSWTENKIMMQT.

4 helical membrane-spanning segments follow: residues phenylalanine 25 to isoleucine 45, tryptophan 69 to isoleucine 90, tryptophan 105 to leucine 125, and phenylalanine 170 to isoleucine 190. Heme b-binding residues include histidine 75 and histidine 89. Heme b-binding residues include histidine 174 and histidine 188. Residue histidine 193 coordinates a ubiquinone. Transmembrane regions (helical) follow at residues tyrosine 218–serine 238, leucine 280–histidine 300, leucine 312–threonine 332, and phenylalanine 339–proline 358.

It belongs to the cytochrome b family. The cytochrome bc1 complex contains 3 respiratory subunits (MT-CYB, CYC1 and UQCRFS1), 2 core proteins (UQCRC1 and UQCRC2) and probably 6 low-molecular weight proteins. Heme b is required as a cofactor.

The protein resides in the mitochondrion inner membrane. Component of the ubiquinol-cytochrome c reductase complex (complex III or cytochrome b-c1 complex) that is part of the mitochondrial respiratory chain. The b-c1 complex mediates electron transfer from ubiquinol to cytochrome c. Contributes to the generation of a proton gradient across the mitochondrial membrane that is then used for ATP synthesis. In Micrurus fulvius (Eastern coral snake), this protein is Cytochrome b (MT-CYB).